We begin with the raw amino-acid sequence, 101 residues long: Small ribosomal subunit protein uS10 (101 aa).

It belongs to the universal ribosomal protein uS10 family. As to quaternary structure, part of the 30S ribosomal subunit.

Involved in the binding of tRNA to the ribosomes. The protein is Small ribosomal subunit protein uS10 of Corynebacterium aurimucosum (strain ATCC 700975 / DSM 44827 / CIP 107346 / CN-1) (Corynebacterium nigricans).